The chain runs to 684 residues: MALDGIRMPDGCYADGTWELKMHVTDLNRDVSLRVTGEIHIGGVMLKLVEKLDVKKDWSDHALWWEKKKTWLLKTHWTLDKYGIQADARLLFTPQHKLLRLQLPNMKHMRVKVNFSDRVFKAVSDICKTFNIRHPEELSLLRKPRDPKKKKKKLEDAEEETLELEGPLLTPGSGSIYSSPGLYSKTMTPTYDSRDGSPLSPTSAWFGDSPLSEGNPSILAVSQPITSPDILVKMYKPQSLLDKAKINQGWLDSSRSLMEQDVKENEVLLLRFKYHSFFDLNPKYDAIRVNQLYEQAKWAILLEEIECTEEEMMMFAALQYHINKLSIMSSDNHMNNSEKEVDEVDAALSDLEITLEGGKTSNTLGDITSIPELADYVKVFKPKKLTLKGYKQYWCTFKDITISCYKSREEAHGTPAHQMNLRGCEVTPDVNISGQKFNIKLLIPVADGMNEIWLRCDTEKQYAQWMAACRLASKGKTMADSSYNLEVQNILSFLKMQHMNPDPQIIEPITTDINPECLVSPRYLKKYKNKQPGFVRDLISARILEAHQNVAQMSLIEAKMRFIQAWQSLPEFGITHFLAKFQGGKKDELIGITYNRLIRMDAGTGDAIKTWRFSNMKQWNVNWEIKMVTVEFADEPSLAFICAEVDCKVVHEFIGGYIFLSTRAKDQNESLDEEMFYKLTSGWV.

The tract at residues 40-81 (HIGGVMLKLVEKLDVKKDWSDHALWWEKKKTWLLKTHWTLDK) is interaction with membranes containing phosphatidylinositol phosphate. Residues 141–163 (LRKPRDPKKKKKKLEDAEEETLE) form a disordered region. The 299-residue stretch at 279 to 577 (DLNPKYDAIR…SLPEFGITHF (299 aa)) folds into the FERM domain. The region spanning 378–474 (KVFKPKKLTL…WMAACRLASK (97 aa)) is the PH domain. Lysine 381 provides a ligand contact to a 1,2-diacyl-sn-glycero-3-phospho-(1D-myo-inositol-3,4,5-trisphosphate).

It belongs to the kindlin family.

The protein resides in the cytoplasm. Its subcellular location is the cell cortex. It is found in the cytoskeleton. It localises to the stress fiber. The protein localises to the cell junction. The protein resides in the focal adhesion. Its subcellular location is the membrane. It is found in the cell projection. It localises to the lamellipodium membrane. The protein localises to the nucleus. The protein resides in the myofibril. Its subcellular location is the sarcomere. It is found in the i band. It localises to the cell surface. Scaffolding protein that enhances integrin activation mediated by TLN1 and/or TLN2, but activates integrins only weakly by itself. Binds to membranes enriched in phosphoinositides. Enhances integrin-mediated cell adhesion onto the extracellular matrix and cell spreading; this requires both its ability to interact with integrins and with phospholipid membranes. Required for the assembly of focal adhesions. Participates in the connection between extracellular matrix adhesion sites and the actin cytoskeleton and also in the orchestration of actin assembly and cell shape modulation. Plays a role in the TGFB1 and integrin signaling pathways. Stabilizes active CTNNB1 and plays a role in the regulation of transcription mediated by CTNNB1 and TCF7L2/TCF4 and in Wnt signaling. Required for normal embryonic development, including normal heart morphogenesis and normal angiogenesis. The polypeptide is Fermitin family homolog 2 (fermt2) (Danio rerio (Zebrafish)).